The sequence spans 916 residues: Translation initiation factor IF-2 (916 aa).

The segment at Asn-50–Lys-326 is disordered. The span at Ala-109–Thr-241 shows a compositional bias: basic and acidic residues. The segment covering Gly-277–Asn-291 has biased composition (basic residues). Residues Arg-292–Ala-304 are compositionally biased toward basic and acidic residues. Positions Ser-415–Lys-584 constitute a tr-type G domain. Residues Gly-424 to Thr-431 form a G1 region. Gly-424 to Thr-431 serves as a coordination point for GTP. Residues Gly-449–His-453 form a G2 region. The tract at residues Asp-470–Gly-473 is G3. GTP contacts are provided by residues Asp-470–His-474 and Asn-524–Asp-527. Residues Asn-524–Asp-527 form a G4 region. Residues Ser-560–Lys-562 form a G5 region.

This sequence belongs to the TRAFAC class translation factor GTPase superfamily. Classic translation factor GTPase family. IF-2 subfamily.

It localises to the cytoplasm. Functionally, one of the essential components for the initiation of protein synthesis. Protects formylmethionyl-tRNA from spontaneous hydrolysis and promotes its binding to the 30S ribosomal subunits. Also involved in the hydrolysis of GTP during the formation of the 70S ribosomal complex. The sequence is that of Translation initiation factor IF-2 from Proteus mirabilis (strain HI4320).